The chain runs to 82 residues: Exodeoxyribonuclease 7 small subunit (82 aa).

The protein belongs to the XseB family. In terms of assembly, heterooligomer composed of large and small subunits.

The protein localises to the cytoplasm. It catalyses the reaction Exonucleolytic cleavage in either 5'- to 3'- or 3'- to 5'-direction to yield nucleoside 5'-phosphates.. In terms of biological role, bidirectionally degrades single-stranded DNA into large acid-insoluble oligonucleotides, which are then degraded further into small acid-soluble oligonucleotides. This chain is Exodeoxyribonuclease 7 small subunit, found in Colwellia psychrerythraea (strain 34H / ATCC BAA-681) (Vibrio psychroerythus).